The sequence spans 1178 residues: Mannosyltransferase regulator 4 (1178 aa).

Over 1-27 (MLQRISSKLHRRFLSGLLRVKHYPLRR) the chain is Cytoplasmic. Residues 28-48 (ILLPLILLQIIIITFIWSNSP) form a helical; Signal-anchor for type II membrane protein membrane-spanning segment. Residues 49–1178 (QRNGLGRDAD…KKKQEEGHSN (1130 aa)) are Lumenal-facing. The short motif at 519 to 521 (DFD) is the DXD element. The interval 1041–1178 (EKKKKEEEEK…KKKQEEGHSN (138 aa)) is disordered. Tandem repeats lie at residues 1042–1049 (KKKKEEEE), 1050–1057 (KKKKEEEE), 1058–1065 (KKKKEEEE), 1066–1073 (KKKKEEEE), 1074–1081 (KKKKEEEE), and 1082–1089 (KKKKEEEE). Residues 1042 to 1174 (KKKKEEEEKK…EEEEKKKQEE (133 aa)) form a 17 X 8 AA tandem repeats of K-K-K-K-E-E-E-E region. The stretch at 1090–1097 (KKKQEEEE) is one 7; approximate repeat. The stretch at 1098–1105 (KKKKEEEE) is repeat 8. One copy of the 9; approximate repeat lies at 1106–1113 (KKKQEEGE). Residues 1114-1121 (KMKNEDEE) form a 10; approximate repeat. The 11; approximate repeat unit spans residues 1122-1129 (NKKNEDEE). Residues 1130-1137 (KKKNEEEE) form repeat 12. The 13; approximate repeat unit spans residues 1138–1144 (KKKQEEK). One copy of the 14; approximate repeat lies at 1145-1152 (NKKNEDEE). One copy of the 15; approximate repeat lies at 1153–1160 (KKKQEEEE). Residues 1161 to 1168 (KKKNEEEE) form a 16; approximate repeat. One copy of the 17; truncated repeat lies at 1169–1174 (KKKQEE).

The protein belongs to the MNN4 family.

The protein localises to the golgi apparatus membrane. Functionally, golgi apparatus protein involved in N-glycan mannosylphosphorylation. While MNN4 seems to have a regulatory role in N-glycan mannosylphosphorylation, a transferase activity of MNN4 can not be ruled out. Mediates mannosylphosphate transfer in both the core and outer chain portions of N-linked oligosaccharides. Has partially redundant function with MNN14. The polypeptide is Mannosyltransferase regulator 4 (Saccharomyces cerevisiae (strain ATCC 204508 / S288c) (Baker's yeast)).